We begin with the raw amino-acid sequence, 85 residues long: Defensin-like protein 76 (85 aa).

The signal sequence occupies residues 1 to 27 (MQNQKHSHILTAITIVLLFAMAAKINA). 4 disulfide bridges follow: Cys35–Cys70, Cys40–Cys59, Cys44–Cys68, and Cys48–Cys69.

It belongs to the DEFL family.

The protein resides in the secreted. This is Defensin-like protein 76 (LCR86) from Arabidopsis thaliana (Mouse-ear cress).